The chain runs to 310 residues: Elongation factor Ts (310 aa).

Residues 80–83 are involved in Mg(2+) ion dislocation from EF-Tu; the sequence is TDFV.

Belongs to the EF-Ts family.

It localises to the cytoplasm. Its function is as follows. Associates with the EF-Tu.GDP complex and induces the exchange of GDP to GTP. It remains bound to the aminoacyl-tRNA.EF-Tu.GTP complex up to the GTP hydrolysis stage on the ribosome. The polypeptide is Elongation factor Ts (Methylocella silvestris (strain DSM 15510 / CIP 108128 / LMG 27833 / NCIMB 13906 / BL2)).